We begin with the raw amino-acid sequence, 243 residues long: HTH-type transcriptional repressor NagR (243 aa).

The region spanning 9-77 (IPIYYQIMEQ…KGRGTFVSKP (69 aa)) is the HTH gntR-type domain. Residues 37 to 56 (EREYAEQFGISRMTVRQALS) constitute a DNA-binding region (H-T-H motif). Alpha-D-glucosamine 6-phosphate is bound by residues 89-90 (FT), 133-135 (RVR), E145, 165-167 (SIY), E222, and Y228. Residues 89-90 (FT), 133-135 (RVR), E145, 165-167 (SIY), E222, and Y228 each bind N-acetyl-D-glucosamine 6-phosphate.

As to quaternary structure, homodimer. Forms dimers via the C-terminal effector-binding domain. At high concentrations, probably forms polymers along the DNA.

Its activity is regulated as follows. Binding to DNA is allosterically inhibited by an effector molecule. Binding of the effector to the C-terminal domain leads to a conformational change that modulates binding to DNA and thereby regulates transcription of the target genes. Glucosamine-6-phosphate (GlcN6P) and/or N-acetylglucosamine-6-phosphate (GlcNAc6P) are putative effectors of NagR. Binding of GlcNAc6P may prevent the protein-protein interactions responsible for polymerization along the DNA, but not the specific DNA binding. Its function is as follows. Main transcriptional repressor of genes involved in N-acetylglucosamine (GlcNAc) transport and utilization. Represses the expression of the nagAB and nagP operons by binding directly within their upstream regions. Binds to the DNA consensus sequence 5'-ATTGGTATAGACAACT-3'. Also acts as a weak repressor of mapB expression. The polypeptide is HTH-type transcriptional repressor NagR (Bacillus subtilis (strain 168)).